Reading from the N-terminus, the 739-residue chain is UPF0313 protein YgiQ (739 aa).

In terms of domain architecture, Radical SAM core spans Ala-372 to Ala-650. [4Fe-4S] cluster contacts are provided by Cys-386, Cys-390, and Cys-393. The disordered stretch occupies residues Arg-685 to Arg-739. Positions Met-704–Pro-724 are enriched in polar residues. The span at Ala-729 to Arg-739 shows a compositional bias: basic residues.

The protein belongs to the UPF0313 family. [4Fe-4S] cluster is required as a cofactor.

In Shigella flexneri, this protein is UPF0313 protein YgiQ.